A 244-amino-acid polypeptide reads, in one-letter code: Cysteine-rich secretory protein 2 (244 aa).

A signal peptide spans 1 to 21 (MALLPVVVFLITMLLPCVLTN). The 128-residue stretch at 43 to 170 (NKHNQLRKSV…SLKYYYVCQY (128 aa)) folds into the SCP domain. 5 disulfide bridges follow: Cys-190/Cys-197, Cys-193/Cys-202, Cys-206/Cys-239, Cys-215/Cys-233, and Cys-224/Cys-237. One can recognise a ShKT domain in the interval 206–239 (CEYEDLLSNCESLKNTAGCEHQLLVEKCKATCRC).

It belongs to the CRISP family. Interacts with NSUN4 isoform 3. Testis.

Its subcellular location is the secreted. In terms of biological role, may regulate some ion channels' activity and thereby regulate calcium fluxes during sperm capacitation. This Cavia porcellus (Guinea pig) protein is Cysteine-rich secretory protein 2 (CRISP2).